The following is a 414-amino-acid chain: 2-acylphloroglucinol 4-prenyltransferase (414 aa).

A chloroplast-targeting transit peptide spans 1–86 (MELSSVSSFS…LKPLSIFSCK (86 aa)). Helical transmembrane passes span 153–173 (FSWPLIFRALLGMLAILGSCF), 201–221 (ISVESAWLLTLSPAIIGFILI), 229–249 (LLTSLYCLAILSGTIYSVPPF), 256–276 (ITAFLCILMIHAGLNFSVYYA), 281–301 (LGLAFVWSPSFSFITAFITFM), 336–356 (LLGTGLLLLNYVAAISTAIIW), 359–379 (AFKSNIMLLSHAILAFSLFFQ), and 394–414 (KSFYEFIWILFSAEYVVYLFI).

This sequence belongs to the UbiA prenyltransferase family. As to quaternary structure, component an active demethylxanthohumol (DMX) biosynthetic metabolon in glandular trichomes (lupulin glands) that encompasses a chalcone synthase (CHS) and a membrane-bound prenyltransferase. Interacts with PT2, forming a functional metabolon. Interacts with CHIL2; this interaction promotes catalytic activity. The cofactor is Mg(2+). In terms of tissue distribution, expressed in trichomes.

The protein localises to the plastid. It localises to the chloroplast membrane. It catalyses the reaction 2',4,4',6'-tetrahydroxychalcone + dimethylallyl diphosphate = desmethylxanthohumol + diphosphate. The enzyme catalyses a 2-acylphloroglucinol + dimethylallyl diphosphate = a 2-acyl-4-prenylphloroglucinol + diphosphate. The protein operates within secondary metabolite biosynthesis. With respect to regulation, stimulated by CHIL2 but inhibited by CHIL1. Involved in the biosynthesis of prenylated phenolics natural products which contribute to the bitter taste of beer and display broad biological activities. Catalyzes the first prenylation step in the beta-bitter acid pathway. Uses dimethylallyl diphosphate (DMAPP) as the prenyl donor. This Humulus lupulus (European hop) protein is 2-acylphloroglucinol 4-prenyltransferase.